The sequence spans 530 residues: UDP-glucuronosyltransferase 2A3 (530 aa).

The signal sequence occupies residues 1–23 (MAPGKLASAVLLLLLCCAGSGFC). The Extracellular portion of the chain corresponds to 24 to 494 (GKVLVWPCEM…SWFQYHSLDV (471 aa)). Asn316 is a glycosylation site (N-linked (GlcNAc...) asparagine). A helical membrane pass occupies residues 495 to 515 (IGFLLACVASAILLVTKCCLF). At 516–530 (SFQNFIKIGKRIKKE) the chain is on the cytoplasmic side.

The protein belongs to the UDP-glycosyltransferase family. In terms of tissue distribution, specifically expressed in liver and small intestine.

It localises to the membrane. The enzyme catalyses glucuronate acceptor + UDP-alpha-D-glucuronate = acceptor beta-D-glucuronoside + UDP + H(+). Functionally, UDP-glucuronosyltransferases catalyze phase II biotransformation reactions in which lipophilic substrates are conjugated with glucuronic acid to increase water solubility and enhance excretion. They are of major importance in the conjugation and subsequent elimination of potentially toxic xenobiotics and endogenous compounds. This Cavia porcellus (Guinea pig) protein is UDP-glucuronosyltransferase 2A3 (UGT2A3).